A 432-amino-acid polypeptide reads, in one-letter code: 5'-deoxyadenosine deaminase (432 aa).

Residues H63 and H65 each coordinate Zn(2+). Residues E92 and H184 each contribute to the substrate site. H211 serves as a coordination point for Zn(2+). 2 residues coordinate substrate: E214 and D299. D299 is a Zn(2+) binding site.

This sequence belongs to the metallo-dependent hydrolases superfamily. MTA/SAH deaminase family. In terms of assembly, homotetramer. The cofactor is Zn(2+).

The catalysed reaction is 5'-deoxyadenosine + H2O + H(+) = 5'-deoxyinosine + NH4(+). The enzyme catalyses S-adenosyl-L-homocysteine + H2O + H(+) = S-inosyl-L-homocysteine + NH4(+). It catalyses the reaction S-methyl-5'-thioadenosine + H2O + H(+) = S-methyl-5'-thioinosine + NH4(+). It carries out the reaction adenosine + H2O + H(+) = inosine + NH4(+). It participates in amino-acid biosynthesis; S-adenosyl-L-methionine biosynthesis. Its function is as follows. Catalyzes the deamination of three SAM-derived enzymatic products, namely 5'-deoxyadenosine, S-adenosyl-L-homocysteine, and 5'-methylthioadenosine, to produce the inosine analogs. Can also deaminate adenosine. The preferred substrate for this enzyme is 5'-deoxyadenosine, but all these substrates are efficiently deaminated. Likely functions in a S-adenosyl-L-methionine (SAM) recycling pathway from S-adenosyl-L-homocysteine (SAH) produced from SAM-dependent methylation reactions. May also be involved in the recycling of 5'-deoxyadenosine, whereupon the 5'-deoxyribose moiety of 5'-deoxyinosine is further metabolized to deoxyhexoses used for the biosynthesis of aromatic amino acids in methanogens. The chain is 5'-deoxyadenosine deaminase from Methanosarcina acetivorans (strain ATCC 35395 / DSM 2834 / JCM 12185 / C2A).